Consider the following 369-residue polypeptide: Glycolate oxidase 1 (369 aa).

In terms of domain architecture, FMN hydroxy acid dehydrogenase spans 1-360; the sequence is MGEITNVMEY…TRAHIYTDAD (360 aa). Tyr25 contributes to the glyoxylate binding site. Residues 78–80, Ser107, 128–130, and Thr156 each bind FMN; these read PSA and QLY. Tyr130 is a binding site for glyoxylate. Arg165 is a binding site for glyoxylate. Lys231 and Ser253 together coordinate FMN. Residues His255 and Arg258 each coordinate glyoxylate. His255 acts as the Proton acceptor in catalysis. Residues 286-290 and 309-310 each bind FMN; these read DGGVR and GR. Residues 367 to 369 carry the Microbody targeting signal motif; the sequence is PRL.

Belongs to the FMN-dependent alpha-hydroxy acid dehydrogenase family. As to quaternary structure, homotetramer. Interacts with rice dwarf virus (RDV) P8. This interaction promotes viral P8 relocation to virus factories peripheral to peroxisomes. Requires FMN as cofactor.

The protein localises to the peroxisome. The enzyme catalyses glycolate + O2 = glyoxylate + H2O2. Its pathway is photosynthesis; photorespiration; glycine from 2-phosphoglycolate: step 2/3. In terms of biological role, catalyzes the oxidation of glycolate to glyoxylate, with a reduction of O2 to H2O2. Is a key enzyme in photorespiration in plants. Can exert a strong regulation over photosynthesis, possibly through a feed-back inhibition on Rubisco activase. Does not seem to play a role in oxalate accumulation. The polypeptide is Glycolate oxidase 1 (GLO1) (Oryza sativa subsp. indica (Rice)).